We begin with the raw amino-acid sequence, 213 residues long: Orotate phosphoribosyltransferase (213 aa).

Residue K26 participates in 5-phospho-alpha-D-ribose 1-diphosphate binding. F34–F35 contributes to the orotate binding site. Residues Y72–K73, R98, K99, K102, and D123–S131 contribute to the 5-phospho-alpha-D-ribose 1-diphosphate site. Positions 127 and 155 each coordinate orotate.

Belongs to the purine/pyrimidine phosphoribosyltransferase family. PyrE subfamily. Homodimer. Requires Mg(2+) as cofactor.

It catalyses the reaction orotidine 5'-phosphate + diphosphate = orotate + 5-phospho-alpha-D-ribose 1-diphosphate. It functions in the pathway pyrimidine metabolism; UMP biosynthesis via de novo pathway; UMP from orotate: step 1/2. Catalyzes the transfer of a ribosyl phosphate group from 5-phosphoribose 1-diphosphate to orotate, leading to the formation of orotidine monophosphate (OMP). The polypeptide is Orotate phosphoribosyltransferase (Neisseria gonorrhoeae (strain ATCC 700825 / FA 1090)).